The following is a 20-amino-acid chain: 23 kDa cell wall protein (20 aa).

The protein localises to the secreted. The protein resides in the cell wall. This is 23 kDa cell wall protein from Arabidopsis thaliana (Mouse-ear cress).